The chain runs to 296 residues: Formamidopyrimidine-DNA glycosylase (296 aa).

Pro-2 serves as the catalytic Schiff-base intermediate with DNA. The Proton donor role is filled by Glu-3. Lys-58 functions as the Proton donor; for beta-elimination activity in the catalytic mechanism. DNA contacts are provided by His-104, Arg-126, and Lys-169. Residues 260–296 (SVYDREGQACGTPGCGGTVARIVQAGRSTFYCAACQK) form an FPG-type zinc finger. The active-site Proton donor; for delta-elimination activity is Arg-286.

The protein belongs to the FPG family. In terms of assembly, monomer. It depends on Zn(2+) as a cofactor.

It catalyses the reaction Hydrolysis of DNA containing ring-opened 7-methylguanine residues, releasing 2,6-diamino-4-hydroxy-5-(N-methyl)formamidopyrimidine.. The enzyme catalyses 2'-deoxyribonucleotide-(2'-deoxyribose 5'-phosphate)-2'-deoxyribonucleotide-DNA = a 3'-end 2'-deoxyribonucleotide-(2,3-dehydro-2,3-deoxyribose 5'-phosphate)-DNA + a 5'-end 5'-phospho-2'-deoxyribonucleoside-DNA + H(+). Functionally, involved in base excision repair of DNA damaged by oxidation or by mutagenic agents. Acts as a DNA glycosylase that recognizes and removes damaged bases. Has a preference for oxidized purines, such as 7,8-dihydro-8-oxoguanine (8-oxoG). Has AP (apurinic/apyrimidinic) lyase activity and introduces nicks in the DNA strand. Cleaves the DNA backbone by beta-delta elimination to generate a single-strand break at the site of the removed base with both 3'- and 5'-phosphates. This is Formamidopyrimidine-DNA glycosylase from Rhizobium etli (strain CIAT 652).